The following is a 274-amino-acid chain: Cytochrome b-c1 complex subunit Rieske, mitochondrial (274 aa).

At 79-103 the chain is on the mitochondrial matrix side; the sequence is SHTDIKVPDFSDYRRSEVLDKTKSS. Residues 104–140 traverse the membrane as a helical segment; the sequence is RESSDARKGFSYLVTAATAVGVTYAAKSIVTQFVSSM. The Mitochondrial intermembrane segment spans residues 141–274; sequence SASADVLAMS…FTGDDMVIVG (134 aa). A Rieske domain is found at 187–272; that stretch reads EAAVELSQLR…YEFTGDDMVI (86 aa). [2Fe-2S] cluster is bound by residues Cys-217, His-219, Cys-236, His-239, and Ser-241. Cys-222 and Cys-238 are joined by a disulfide.

This sequence belongs to the Rieske iron-sulfur protein family. In terms of assembly, component of the ubiquinol-cytochrome c oxidoreductase (cytochrome b-c1 complex, complex III, CIII), a multisubunit enzyme composed of 11 subunits. The complex is composed of 3 respiratory subunits cytochrome b, cytochrome c1 and Rieske protein UQCRFS1, 2 core protein subunits UQCRC1/QCR1 and UQCRC2/QCR2, and 6 low-molecular weight protein subunits UQCRH/QCR6, UQCRB/QCR7, UQCRQ/QCR8, UQCR10/QCR9, UQCR11/QCR10 and subunit 9, the cleavage product of Rieske protein UQCRFS1. The complex exists as an obligatory dimer and forms supercomplexes (SCs) in the inner mitochondrial membrane with NADH-ubiquinone oxidoreductase (complex I, CI) and cytochrome c oxidase (complex IV, CIV), resulting in different assemblies (supercomplex SCI(1)III(2)IV(1) and megacomplex MCI(2)III(2)IV(2)). Incorporation of the Rieske protein UQCRFS1 is the penultimate step in complex III assembly. Interacts with TTC19, which is involved in the clearance of UQCRFS1 fragments. Component of the ubiquinol-cytochrome c oxidoreductase (cytochrome b-c1 complex, complex III, CIII). Subunit 9 corresponds to the mitochondrial targeting sequence (MTS) of Rieske protein UQCRFS1. It is retained after processing and incorporated inside complex III, where it remains bound to the complex and localizes between the 2 core subunits UQCRC1/QCR1 and UQCRC2/QCR2. Requires [2Fe-2S] cluster as cofactor. Post-translationally, proteolytic processing is necessary for the correct insertion of UQCRFS1 in the complex III dimer. Several fragments are generated during UQCRFS1 insertion, most probably due to the endogenous matrix-processing peptidase (MPP) activity of the 2 core protein subunits UQCRC1/QCR1 and UQCRC2/QCR2, which are homologous to the 2 mitochondrial-processing peptidase (MPP) subunits beta-MPP and alpha-MPP respectively. The action of the protease is also necessary for the clearance of the UQCRFS1 fragments.

Its subcellular location is the mitochondrion inner membrane. The enzyme catalyses a quinol + 2 Fe(III)-[cytochrome c](out) = a quinone + 2 Fe(II)-[cytochrome c](out) + 2 H(+)(out). Its function is as follows. Component of the ubiquinol-cytochrome c oxidoreductase, a multisubunit transmembrane complex that is part of the mitochondrial electron transport chain which drives oxidative phosphorylation. The respiratory chain contains 3 multisubunit complexes succinate dehydrogenase (complex II, CII), ubiquinol-cytochrome c oxidoreductase (cytochrome b-c1 complex, complex III, CIII) and cytochrome c oxidase (complex IV, CIV), that cooperate to transfer electrons derived from NADH and succinate to molecular oxygen, creating an electrochemical gradient over the inner membrane that drives transmembrane transport and the ATP synthase. The cytochrome b-c1 complex catalyzes electron transfer from ubiquinol to cytochrome c, linking this redox reaction to translocation of protons across the mitochondrial inner membrane, with protons being carried across the membrane as hydrogens on the quinol. In the process called Q cycle, 2 protons are consumed from the matrix, 4 protons are released into the intermembrane space and 2 electrons are passed to cytochrome c. The Rieske protein is a catalytic core subunit containing a [2Fe-2S] iron-sulfur cluster. It cycles between 2 conformational states during catalysis to transfer electrons from the quinol bound in the Q(0) site in cytochrome b to cytochrome c1. Incorporation of UQCRFS1 is the penultimate step in complex III assembly. Component of the ubiquinol-cytochrome c oxidoreductase (cytochrome b-c1 complex, complex III, CIII). UQCRFS1 undergoes proteolytic processing once it is incorporated in the complex III dimer. One of the fragments, called subunit 9, corresponds to its mitochondrial targeting sequence (MTS). The proteolytic processing is necessary for the correct insertion of UQCRFS1 in the complex III dimer, but the persistence of UQCRFS1-derived fragments may prevent newly imported UQCRFS1 to be processed and assembled into complex III and is detrimental for the complex III structure and function. In Lagothrix lagotricha (Brown woolly monkey), this protein is Cytochrome b-c1 complex subunit Rieske, mitochondrial (UQCRFS1).